The sequence spans 130 residues: Phosphoribosyl-AMP cyclohydrolase (130 aa).

Residue Asp78 coordinates Mg(2+). Cys79 serves as a coordination point for Zn(2+). 2 residues coordinate Mg(2+): Asp80 and Asp82. Zn(2+) is bound by residues Cys96 and Cys103.

The protein belongs to the PRA-CH family. In terms of assembly, homodimer. It depends on Mg(2+) as a cofactor. Zn(2+) is required as a cofactor.

It is found in the cytoplasm. The enzyme catalyses 1-(5-phospho-beta-D-ribosyl)-5'-AMP + H2O = 1-(5-phospho-beta-D-ribosyl)-5-[(5-phospho-beta-D-ribosylamino)methylideneamino]imidazole-4-carboxamide. Its pathway is amino-acid biosynthesis; L-histidine biosynthesis; L-histidine from 5-phospho-alpha-D-ribose 1-diphosphate: step 3/9. Functionally, catalyzes the hydrolysis of the adenine ring of phosphoribosyl-AMP. The sequence is that of Phosphoribosyl-AMP cyclohydrolase from Nitrosospira multiformis (strain ATCC 25196 / NCIMB 11849 / C 71).